The primary structure comprises 360 residues: MLKFTQSYQFIQNNREGTALLAILALFALLGVIDRNYFNLQTFTMIFSSAQILILLAIGATMVMLTRNIDVSVGSITGLCAVTVGMALNAGFGLALSCLFALLVGMGAGFFNGILVTWLRIPAIVATLGTLGLYRGLMLLLTGGKWIEGLPADLKSLSTPILFSISPIGWLIMLLIVAMALLLGKTAFGRSFYATGDNLQGARQLGIRTDSIRIFAFSMNGVMAALAGIVFASQIGFIPNQTGSGLEMKAIAACVLGGISLLGGTGTIIGAILGAYLLTQIDSVLVLLRLPAWWNDFIAGLVLLGVLVFDGRLRCAVERNIRQQKYARFTTRPVAPDKKVKSNNNKAPSSKSFTKKEVVR.

9 helical membrane passes run 18 to 38 (TALL…RNYF), 45 to 65 (MIFS…MVML), 76 to 96 (ITGL…GLAL), 99 to 119 (LFAL…VTWL), 121 to 141 (IPAI…MLLL), 161 to 181 (ILFS…AMAL), 219 to 239 (MNGV…GFIP), 255 to 275 (VLGG…ILGA), and 290 to 310 (LPAW…LVFD). Residues 334 to 360 (VAPDKKVKSNNNKAPSSKSFTKKEVVR) form a disordered region. The segment covering 342–352 (SNNNKAPSSKS) has biased composition (low complexity).

This sequence belongs to the binding-protein-dependent transport system permease family. AraH/RbsC subfamily. As to quaternary structure, the complex is composed of two ATP-binding proteins (LsrA), two transmembrane proteins (LsrC and LsrD) and a solute-binding protein (LsrB).

The protein localises to the cell inner membrane. Its function is as follows. Part of the ABC transporter complex LsrABCD involved in autoinducer 2 (AI-2) import. Probably responsible for the translocation of the substrate across the membrane. This chain is Autoinducer 2 import system permease protein LsrC (lsrC), found in Yersinia enterocolitica serotype O:8 / biotype 1B (strain NCTC 13174 / 8081).